A 365-amino-acid chain; its full sequence is Chorismate synthase (365 aa).

Position 48 (R48) interacts with NADP(+). FMN contacts are provided by residues 125–127 (RGS), G286, 301–305 (KPTPS), and R328.

This sequence belongs to the chorismate synthase family. Requires FMNH2 as cofactor.

The enzyme catalyses 5-O-(1-carboxyvinyl)-3-phosphoshikimate = chorismate + phosphate. It functions in the pathway metabolic intermediate biosynthesis; chorismate biosynthesis; chorismate from D-erythrose 4-phosphate and phosphoenolpyruvate: step 7/7. Its function is as follows. Catalyzes the anti-1,4-elimination of the C-3 phosphate and the C-6 proR hydrogen from 5-enolpyruvylshikimate-3-phosphate (EPSP) to yield chorismate, which is the branch point compound that serves as the starting substrate for the three terminal pathways of aromatic amino acid biosynthesis. This reaction introduces a second double bond into the aromatic ring system. This is Chorismate synthase from Methanosphaera stadtmanae (strain ATCC 43021 / DSM 3091 / JCM 11832 / MCB-3).